Reading from the N-terminus, the 258-residue chain is MSKVKLTKENIVSLLTQSEDVEFEEDQNQVAFNFKTFCQENLDLIKKMSITSCLTFLKNRQSIMKVVKQSDFTFGKVTIKKNSERVEAKDMTFRRLDSMIRVKLIEETANNENLAIIKAKIASHPLVQAYGLPLDDAKSVRLAIMLGGSIPLIASVDSLEMISVVLAIYQDSQVQELGIEPTKYNTKEALGKVCTVLKSKGFTMDDAQDNKGKEYAKILSSCNPNAKGSIAMDYYSDNLEKFYEMFGVKKEAKIAGVA.

Belongs to the tospovirus nucleocapsid protein family. Homotrimer. Binds the viral genomic RNA.

It localises to the virion. In terms of biological role, encapsidates the genome protecting it from nucleases. The encapsidated genomic RNA is termed the nucleocapsid (NC) and serves as template for transcription and replication. The NC have a helical organization. The sequence is that of Nucleoprotein (N) from Frankliniella occidentalis (Western flower thrips).